A 321-amino-acid chain; its full sequence is F-box protein At4g35930 (321 aa).

Residues 1-13 are compositionally biased toward basic and acidic residues; that stretch reads MGKVSPKDLDSKT. A disordered region spans residues 1-23; that stretch reads MGKVSPKDLDSKTSVRKKKLKSS. Positions 159–207 constitute an F-box domain; the sequence is ESQLESLPMDLLVKIVCHLHHDQLKAVFHVSQRIRMATILARQYHFNYT. Residues 228-258 form a disordered region; sequence WPFRRGDGNPTMVSSPHTPKAPKHAPRPPSR.

The polypeptide is F-box protein At4g35930 (Arabidopsis thaliana (Mouse-ear cress)).